Here is a 306-residue protein sequence, read N- to C-terminus: Armadillo repeat-containing protein 10 (306 aa).

The helical transmembrane segment at 7–29 threads the bilayer; sequence VGWVAAGLVLGAGACYCIYRLTR. Phosphoserine is present on S43. T48 carries the phosphothreonine modification. Residues 101–143 form an ARM repeat; it reads GGIPIVGNKINSLNQSIKEKALNALNNLSVNVENQTKIKIYVP.

Interacts with the DNA-binding domain of p53/TP53.

The protein localises to the endoplasmic reticulum membrane. It is found in the mitochondrion outer membrane. Its function is as follows. May play a role in cell survival and cell growth. May suppress the transcriptional activity of p53/TP53. This is Armadillo repeat-containing protein 10 (Armc10) from Mus musculus (Mouse).